A 242-amino-acid chain; its full sequence is Sec-independent protein translocase protein TatCd (242 aa).

The next 3 helical transmembrane spans lie at 19–39 (IIVT…FVQD), 60–80 (ILWV…IPVA), and 107–127 (LFAL…PIVL). The interval 128–149 (SFLTHLSSGHFETMFTADRYFR) is interaction with TatAd. Residues 150–170 (FMVNLSLPFGFLFEMPLVVMF) form a helical membrane-spanning segment. An interaction with TatAd region spans residues 171–187 (LTRLGILNPYRLAKARK). 2 consecutive transmembrane segments (helical) span residues 188 to 208 (LSYF…FISD) and 209 to 229 (FLVM…SAFV).

This sequence belongs to the TatC family. In terms of assembly, forms a complex with TatAd. Two types of complexes exist: one composed of TatAd and TatCd, and another composed only of TatAd.

The protein localises to the cell membrane. Functionally, part of the twin-arginine translocation (Tat) system that transports large folded proteins containing a characteristic twin-arginine motif in their signal peptide across membranes. Required for PhoD secretion. TatCd promotes membrane localization of TatAd via domain specific interactions. TatCd is required for stabile production of TatAd as well as for its maintenance. The sequence is that of Sec-independent protein translocase protein TatCd from Bacillus subtilis (strain 168).